A 440-amino-acid polypeptide reads, in one-letter code: Thymidine phosphorylase (440 aa).

It belongs to the thymidine/pyrimidine-nucleoside phosphorylase family. As to quaternary structure, homodimer.

The catalysed reaction is thymidine + phosphate = 2-deoxy-alpha-D-ribose 1-phosphate + thymine. It functions in the pathway pyrimidine metabolism; dTMP biosynthesis via salvage pathway; dTMP from thymine: step 1/2. Functionally, the enzymes which catalyze the reversible phosphorolysis of pyrimidine nucleosides are involved in the degradation of these compounds and in their utilization as carbon and energy sources, or in the rescue of pyrimidine bases for nucleotide synthesis. This is Thymidine phosphorylase from Salmonella paratyphi A (strain ATCC 9150 / SARB42).